The chain runs to 26 residues: Neprilysin (26 aa).

Belongs to the peptidase M13 family. Zn(2+) is required as a cofactor.

Its subcellular location is the cell membrane. It catalyses the reaction Preferential cleavage of polypeptides between hydrophobic residues, particularly with Phe or Tyr at P1'.. The catalysed reaction is substance P + H2O = substance P(1-9) + L-Leu-L-Met-NH2. The enzyme catalyses substance P + H2O = substance P(1-7) + L-Phe-Gly-L-Leu-L-Met-NH2. It carries out the reaction neurotensin + H2O = neurotensin(1-11) + L-isoleucyl-L-leucine. It catalyses the reaction neurotensin + H2O = neurotensin(1-10) + L-tyrosyl-L-isoleucyl-L-leucine. Its function is as follows. Thermolysin-like specificity, but is almost confined on acting on polypeptides of up to 30 amino acids. Biologically important in the destruction of opioid peptides such as Met- and Leu-enkephalins by cleavage of a Gly-Phe bond. Catalyzes cleavage of bradykinin, substance P and neurotensin peptides. Able to cleave angiotensin-1, angiotensin-2 and angiotensin 1-9. Involved in the degradation of atrial natriuretic factor (ANF) and brain natriuretic factor (BNP(1-32)). Displays UV-inducible elastase activity toward skin preelastic and elastic fibers. This chain is Neprilysin (MME), found in Sus scrofa (Pig).